The following is a 276-amino-acid chain: Diacetylchitobiose uptake system permease protein DasC (276 aa).

The next 6 membrane-spanning stretches (helical) occupy residues 14 to 34, 74 to 94, 105 to 125, 137 to 157, 186 to 206, and 241 to 261; these read TAVV…ATAF, LIVT…GSFA, GFIV…VIAI, SLVP…ILTL, VILP…FITA, and GATM…FVYL. The ABC transmembrane type-1 domain maps to 70–261; it reads VSNSLIVTVC…IPILILFVYL (192 aa).

The protein belongs to the binding-protein-dependent transport system permease family. The complex is composed of two ATP-binding proteins (MsiK), two transmembrane proteins (DasB and DasC) and a solute-binding protein (DasA).

The protein resides in the cell membrane. Its function is as follows. Part of the ABC transporter complex DasABC-MsiK involved in N,N'-diacetylchitobiose ((GlcNAc)2) uptake. Responsible for the translocation of the substrate across the membrane. In Streptomyces coelicolor (strain ATCC BAA-471 / A3(2) / M145), this protein is Diacetylchitobiose uptake system permease protein DasC.